The following is a 208-amino-acid chain: ATP-dependent Clp protease proteolytic subunit (208 aa).

Ser-107 functions as the Nucleophile in the catalytic mechanism. His-132 is a catalytic residue.

This sequence belongs to the peptidase S14 family. In terms of assembly, fourteen ClpP subunits assemble into 2 heptameric rings which stack back to back to give a disk-like structure with a central cavity, resembling the structure of eukaryotic proteasomes.

The protein localises to the cytoplasm. The catalysed reaction is Hydrolysis of proteins to small peptides in the presence of ATP and magnesium. alpha-casein is the usual test substrate. In the absence of ATP, only oligopeptides shorter than five residues are hydrolyzed (such as succinyl-Leu-Tyr-|-NHMec, and Leu-Tyr-Leu-|-Tyr-Trp, in which cleavage of the -Tyr-|-Leu- and -Tyr-|-Trp bonds also occurs).. Its function is as follows. Cleaves peptides in various proteins in a process that requires ATP hydrolysis. Has a chymotrypsin-like activity. Plays a major role in the degradation of misfolded proteins. The sequence is that of ATP-dependent Clp protease proteolytic subunit from Jannaschia sp. (strain CCS1).